The primary structure comprises 226 residues: uncharacterized protein (226 aa).

In terms of domain architecture, N-acetyltransferase spans 18–219 (LTIRNYTETD…YGVLMEWKNV (202 aa)).

The protein belongs to the acetyltransferase family.

This is an uncharacterized protein from Bacillus subtilis (strain 168).